The following is a 788-amino-acid chain: IQ motif and ubiquitin-like domain-containing protein (788 aa).

Residues 1-89 (MSDPEEERVA…SLGSASGSQD (89 aa)) are disordered. A compositionally biased stretch (basic and acidic residues) spans 7–20 (ERVADSTAHYEEAG). Over residues 31 to 54 (EAEGSDVMPEQDDEVQELTTESEE) the composition is skewed to acidic residues. Residues 68–78 (KSDDSKPREEV) show a composition bias toward basic and acidic residues. The span at 80–89 (SLGSASGSQD) shows a compositional bias: polar residues. The region spanning 127–203 (ATVKIVLIPA…VQVEVFSTLP (77 aa)) is the Ubiquitin-like domain. The region spanning 334 to 363 (RLHAVIVIQTSYRRWHAKRYVESLRKQKKL) is the IQ domain.

As to quaternary structure, component of the axonemal radial spoke 1 (RS1) complex, at least composed of spoke head proteins RSPH1, RSPH3B, RSPH9 and the cilia-specific component RSPH4A or sperm-specific component RSPH6A, spoke stalk proteins RSPH14, DNAJB13, DYDC1, ROPN1L and NME5, and the anchor protein IQUB. Does not appear to be part of radial spoke complexes 2 or 3 (RS2 or RS3). Interacts with CALM1. Interacts with DNAJB13. Interacts with DYNLL2. Interacts with NME5. Interacts with RSPH3. Interacts with RSPH9. Interacts with ZMYND10. Interacts with calmodulin; the interaction occurs in conditions of low but not high calcium. Expressed in the flagellum of sperm cells and cilia of tracheal epithelial cells (at protein level). High expression in testis, also present in brain and lung.

Its subcellular location is the cytoplasm. The protein localises to the cytoskeleton. It localises to the flagellum axoneme. The protein resides in the cell projection. It is found in the cilium. In terms of biological role, anchors the radial spoke 1 (RS1) complex to the A microtubule of outer doublet microtubules in axonemes. The triple radial spokes (RS1, RS2 and RS3) are required to modulate beating of the sperm flagellum. May play a role in inhibiting signaling via MAPK1/ERK2 and MAPK3/ERK1. Additionally, may play a role in the functioning of cilia. Not required for the functioning of tracheal or ependymal cilia. This Mus musculus (Mouse) protein is IQ motif and ubiquitin-like domain-containing protein (Iqub).